Consider the following 161-residue polypeptide: Short form salivary protein D7S (161 aa).

The N-terminal stretch at 1–18 is a signal peptide; it reads MKFPSILLAILLFKPITA. 3 cysteine pairs are disulfide-bonded: Cys33/Cys67, Cys47/Cys155, and Cys109/Cys125.

It belongs to the PBP/GOBP family.

It is found in the secreted. In terms of biological role, in contrast to the related D7 salivary proteins, does not bind serotonin. This is Short form salivary protein D7S from Culex quinquefasciatus (Southern house mosquito).